A 596-amino-acid polypeptide reads, in one-letter code: Transcription factor EGL1 (596 aa).

One can recognise a bHLH domain in the interval Glu-401–Leu-450.

In terms of assembly, efficient DNA binding requires dimerization with another bHLH protein. Homodimer and heterodimer with GL3. Interacts with CPC, MYB0/GL1, MYB5, MYB23, MYB113, MYB114, MYB75/PAP1, MYB90/PAP2, TT2, TRY, TTG1 and MYB66/WER. As to expression, ubiquitous with higher levels in buds and flowers. Specifically localized in developing root hair cells. Expressed in epidermal root hair cells (trichoblasts) and moves to root hairless cells (atrichoblasts) by a cell-to-cell movement through plasmodesmata (at protein level).

Its subcellular location is the nucleus. In terms of biological role, transcription activator, when associated with MYB75/PAP1, MYB90/PAP2 or TT2. Involved in epidermal cell fate specification. Negatively regulates stomata formation but promotes trichome formation. Together with MYB66/WER, promotes the formation of non-hair cells in root epidermis cells in the N position. Whereas together with CPC, promotes the formation of hair cells in root epidermis cells in the H position by inhibiting non-hair cell formation. Also seems to play a role in the activation of anthocyanin biosynthesis, probably together with MYB75/PAP1. Involved in seed mucilage production. Activates the transcription of GL2. This Arabidopsis thaliana (Mouse-ear cress) protein is Transcription factor EGL1 (BHLH2).